A 519-amino-acid polypeptide reads, in one-letter code: Sensor protein RprX (519 aa).

A run of 2 helical transmembrane segments spans residues 5–25 (TIWILGIIMGLSFLSLLYLQV) and 260–280 (IPSMIFTIVLLITFIFTIYIV). A Histidine kinase domain is found at 296–517 (NMTHEFKTPI…KFIIALPLLK (222 aa)). H299 is subject to Phosphohistidine; by autocatalysis.

The protein resides in the cell membrane. The catalysed reaction is ATP + protein L-histidine = ADP + protein N-phospho-L-histidine.. Functionally, member of the two-component regulatory system RprX/RprY. May activate RprY by phosphorylation. This chain is Sensor protein RprX (rprX), found in Bacteroides fragilis (strain YCH46).